Consider the following 236-residue polypeptide: Probable glutathione S-transferase BZ2 (236 aa).

In terms of domain architecture, GST N-terminal spans 1-80 (MRVLGGEVSP…YIEDVARESG (80 aa)). Glutathione contacts are provided by residues S9, K37, I51, and 64-65 (ES). Positions 92 to 221 (DPYERAMHRF…LPDTEKVVQF (130 aa)) constitute a GST C-terminal domain.

The protein belongs to the GST superfamily. HSP26 family.

The catalysed reaction is RX + glutathione = an S-substituted glutathione + a halide anion + H(+). The protein operates within pigment biosynthesis; anthocyanin biosynthesis. This is Probable glutathione S-transferase BZ2 (BZ2) from Zea mays (Maize).